A 252-amino-acid polypeptide reads, in one-letter code: Acetoacetate decarboxylase (252 aa).

Lys-116 (schiff-base intermediate with acetoacetate) is an active-site residue.

It belongs to the ADC family.

It catalyses the reaction acetoacetate + H(+) = acetone + CO2. Its function is as follows. Catalyzes the conversion of acetoacetate to acetone and carbon dioxide. This chain is Acetoacetate decarboxylase, found in Paraburkholderia phytofirmans (strain DSM 17436 / LMG 22146 / PsJN) (Burkholderia phytofirmans).